A 489-amino-acid chain; its full sequence is DBIRD complex subunit ZNF326 (489 aa).

Disordered regions lie at residues 1 to 28 (MDREYGSYNQRSMDSYGNQSYSVDEMGD), 62 to 100 (EQGHFGDSYDGRYENPYRNSVDSFEGRSQGGSSWDPSFT), 133 to 181 (VGSR…RPGL), and 205 to 263 (PPFK…KNSE). Over residues 7–22 (SYNQRSMDSYGNQSYS) the composition is skewed to polar residues. The span at 62 to 76 (EQGHFGDSYDGRYEN) shows a compositional bias: basic and acidic residues. A compositionally biased stretch (polar residues) spans 91-100 (GGSSWDPSFT). Residues 200 to 221 (KRKMAPPFKPVGVFGKKQKLSK) carry the Bipartite nuclear localization signal motif. C2H2 AKAP95-type zinc fingers lie at residues 273-295 (CSFCKFRSFDEKGIEEHLSSTTH) and 365-388 (CSACSVYVPALHSSVQLHLKSADH). The interval 431–489 (ETQPEEQQQEQEEEEEEEEQQEQAAVPEQDLSEEQPAAIAAEPEGEDFTCDPLTTTDEV) is disordered. Positions 433 to 451 (QPEEQQQEQEEEEEEEEQQ) are enriched in acidic residues.

The protein belongs to the AKAP95 family. As to quaternary structure, component of the DBIRD complex.

It localises to the nucleus. Its function is as follows. Core component of the DBIRD complex, a multiprotein complex that acts at the interface between core mRNP particles and RNA polymerase II (RNAPII) and integrates transcript elongation with the regulation of alternative splicing. The chain is DBIRD complex subunit ZNF326 (znf326) from Xenopus tropicalis (Western clawed frog).